Consider the following 178-residue polypeptide: Ribosome maturation factor RimM (178 aa).

The PRC barrel domain maps to 99–178 (QGEFYWRDLI…EITVDWDPGF (80 aa)).

Belongs to the RimM family. As to quaternary structure, binds ribosomal protein uS19.

Its subcellular location is the cytoplasm. Its function is as follows. An accessory protein needed during the final step in the assembly of 30S ribosomal subunit, possibly for assembly of the head region. Essential for efficient processing of 16S rRNA. May be needed both before and after RbfA during the maturation of 16S rRNA. It has affinity for free ribosomal 30S subunits but not for 70S ribosomes. This chain is Ribosome maturation factor RimM, found in Pseudoalteromonas translucida (strain TAC 125).